The following is a 690-amino-acid chain: Glycine--tRNA ligase beta subunit (690 aa).

This sequence belongs to the class-II aminoacyl-tRNA synthetase family. As to quaternary structure, tetramer of two alpha and two beta subunits.

Its subcellular location is the cytoplasm. The enzyme catalyses tRNA(Gly) + glycine + ATP = glycyl-tRNA(Gly) + AMP + diphosphate. This Tolumonas auensis (strain DSM 9187 / NBRC 110442 / TA 4) protein is Glycine--tRNA ligase beta subunit.